A 733-amino-acid chain; its full sequence is Catalase-peroxidase (733 aa).

The tract at residues 1-25 (MNEERKCPITGATHKPSAEKGRSNH) is disordered. Positions 16 to 25 (PSAEKGRSNH) are enriched in basic and acidic residues. The tryptophyl-tyrosyl-methioninium (Trp-Tyr) (with M-245) cross-link spans 96-219 (WHSAGTYRTS…LAAVQMGLIY (124 aa)). His-97 (proton acceptor) is an active-site residue. Positions 219–245 (YVNPEGPNGKPDPLAAAKDIRETFARM) form a cross-link, tryptophyl-tyrosyl-methioninium (Tyr-Met) (with W-96). His-260 serves as a coordination point for heme b.

It belongs to the peroxidase family. Peroxidase/catalase subfamily. In terms of assembly, homodimer or homotetramer. The cofactor is heme b. Formation of the three residue Trp-Tyr-Met cross-link is important for the catalase, but not the peroxidase activity of the enzyme.

It catalyses the reaction H2O2 + AH2 = A + 2 H2O. It carries out the reaction 2 H2O2 = O2 + 2 H2O. In terms of biological role, bifunctional enzyme with both catalase and broad-spectrum peroxidase activity. This chain is Catalase-peroxidase, found in Chlorobium chlorochromatii (strain CaD3).